The chain runs to 262 residues: Serine O-acetyltransferase (262 aa).

The active-site Acyl-thioester intermediate is Cys107. Substrate is bound at residue Lys128. His200 (proton acceptor) is an active-site residue. The active site involves Glu202. Residue Arg214 coordinates substrate.

Belongs to the MetA family.

The protein localises to the cytoplasm. It catalyses the reaction L-serine + acetyl-CoA = O-acetyl-L-serine + CoA. The enzyme catalyses L-homoserine + acetyl-CoA = O-acetyl-L-homoserine + CoA. Its pathway is amino-acid biosynthesis; L-cysteine biosynthesis; L-cysteine from L-serine: step 1/2. In terms of biological role, transfers an acetyl group from acetyl-CoA to L-serine, forming acetyl-L-serine. In vitro, also has homoserine acetyl transferase activity. The polypeptide is Serine O-acetyltransferase (Lactobacillus acidophilus).